The following is a 250-amino-acid chain: Proteasome subunit alpha (250 aa).

The protein belongs to the peptidase T1A family. The 20S proteasome core is composed of 14 alpha and 14 beta subunits that assemble into four stacked heptameric rings, resulting in a barrel-shaped structure. The two inner rings, each composed of seven catalytic beta subunits, are sandwiched by two outer rings, each composed of seven alpha subunits. The catalytic chamber with the active sites is on the inside of the barrel. Has a gated structure, the ends of the cylinder being occluded by the N-termini of the alpha-subunits. Is capped by the proteasome-associated ATPase, ARC.

The protein resides in the cytoplasm. It participates in protein degradation; proteasomal Pup-dependent pathway. The formation of the proteasomal ATPase ARC-20S proteasome complex, likely via the docking of the C-termini of ARC into the intersubunit pockets in the alpha-rings, may trigger opening of the gate for substrate entry. Interconversion between the open-gate and close-gate conformations leads to a dynamic regulation of the 20S proteasome proteolysis activity. Component of the proteasome core, a large protease complex with broad specificity involved in protein degradation. The polypeptide is Proteasome subunit alpha (Mycobacterium sp. (strain JLS)).